The sequence spans 556 residues: Dihydroxy-acid dehydratase (556 aa).

Residue C47 participates in [2Fe-2S] cluster binding. Mg(2+) is bound at residue D79. Residue C120 participates in [2Fe-2S] cluster binding. Mg(2+)-binding residues include D121 and K122. The residue at position 122 (K122) is an N6-carboxylysine. Residue C192 participates in [2Fe-2S] cluster binding. A Mg(2+)-binding site is contributed by E444. S470 functions as the Proton acceptor in the catalytic mechanism.

Belongs to the IlvD/Edd family. In terms of assembly, homodimer. Requires [2Fe-2S] cluster as cofactor. Mg(2+) is required as a cofactor.

It carries out the reaction (2R)-2,3-dihydroxy-3-methylbutanoate = 3-methyl-2-oxobutanoate + H2O. It catalyses the reaction (2R,3R)-2,3-dihydroxy-3-methylpentanoate = (S)-3-methyl-2-oxopentanoate + H2O. It functions in the pathway amino-acid biosynthesis; L-isoleucine biosynthesis; L-isoleucine from 2-oxobutanoate: step 3/4. It participates in amino-acid biosynthesis; L-valine biosynthesis; L-valine from pyruvate: step 3/4. Functionally, functions in the biosynthesis of branched-chain amino acids. Catalyzes the dehydration of (2R,3R)-2,3-dihydroxy-3-methylpentanoate (2,3-dihydroxy-3-methylvalerate) into 2-oxo-3-methylpentanoate (2-oxo-3-methylvalerate) and of (2R)-2,3-dihydroxy-3-methylbutanoate (2,3-dihydroxyisovalerate) into 2-oxo-3-methylbutanoate (2-oxoisovalerate), the penultimate precursor to L-isoleucine and L-valine, respectively. This is Dihydroxy-acid dehydratase from Prochlorococcus marinus (strain MIT 9313).